The chain runs to 282 residues: Ubiquinone biosynthesis protein COQ4 homolog, mitochondrial (282 aa).

The N-terminal 30 residues, 1–30 (MFVRKSCYSLINATRRCLRYRQLSSTTAGT), are a transit peptide targeting the mitochondrion. Residues histidine 186, aspartate 187, histidine 190, and glutamate 202 each coordinate Zn(2+).

Belongs to the COQ4 family. In terms of assembly, component of a multi-subunit COQ enzyme complex. Requires Zn(2+) as cofactor.

It localises to the mitochondrion inner membrane. It carries out the reaction a 4-hydroxy-3-methoxy-5-(all-trans-polyprenyl)benzoate + H(+) = a 2-methoxy-6-(all-trans-polyprenyl)phenol + CO2. Its pathway is cofactor biosynthesis; ubiquinone biosynthesis. Its function is as follows. Lyase that catalyzes the C1-decarboxylation of 4-hydroxy-3-methoxy-5-(all-trans-polyprenyl)benzoic acid into 2-methoxy-6-(all-trans-polyprenyl)phenol during ubiquinone biosynthesis. The protein is Ubiquinone biosynthesis protein COQ4 homolog, mitochondrial of Anopheles gambiae (African malaria mosquito).